A 428-amino-acid chain; its full sequence is MPDHSHIYIGSAFVAGVVLTIAFKDLFYPEIEERIRDYRARHSSKSYQNASVDSLAVRHGPPAIVDGIEGCIGNTPLLRIKSLSEATGCEILAKAEFLNGAGQSSKDRVALSMIELAEERGLMTPHSGDTIYEGTSGSTGISLATLARAKGYLAHICMPSDQAIEKSNLLLKLGAIVDRVPPAPIVEKDNFVNRARALAQAHTNSTASESSVGTASQRGRGYFADQFENEANWRAHYNGTGPEIYAQCNGSLDAFVAGAGTGGTISGVALYLKPRIPNMTVVVADPQGSGLYNRVRYGVMFDTKEKEGTRRRRQVDTIVEGIGINRVTANFEAGRELVDDAVRVTDAQALAMARWLVEKDGIFAGSSSAVNCFAAVKTALKLGPGHRIVTMLSDSGSRHLSRFWAKAGNVGGAVDTKLEDVLNAKEDQ.

Residues 7-27 (IYIGSAFVAGVVLTIAFKDLF) form a helical membrane-spanning segment. An N6-(pyridoxal phosphate)lysine modification is found at K106. Pyridoxal 5'-phosphate is bound by residues 260 to 264 (GTGGT) and S367.

Belongs to the cysteine synthase/cystathionine beta-synthase family. Pyridoxal 5'-phosphate is required as a cofactor.

It localises to the mitochondrion outer membrane. It carries out the reaction O-acetyl-L-serine + hydrogen sulfide = L-cysteine + acetate. Its function is as follows. Putative cysteine synthase that catalyzes the conversion of O-acetyl-L-serine (OAS) into cysteine, the last step in the cysteine biosynthesis pathway. However, in contrast to cysteine synthase cysB, this CS-like protein seems not to function in cysteine biosynthesis. The polypeptide is Cysteine synthase 2 (Emericella nidulans (strain FGSC A4 / ATCC 38163 / CBS 112.46 / NRRL 194 / M139) (Aspergillus nidulans)).